The chain runs to 1127 residues: Disease resistance protein RPS6 (1127 aa).

N-acetylmethionine is present on M1. A TIR domain is found at 12 to 176 (WSYHVFPSFS…EIANDILGKM (165 aa)). The active site involves E87. LRR repeat units follow at residues 197 to 221 (MSSL…GIGK), 540 to 563 (IDET…LFLK), 587 to 609 (PSRL…NFHP), 610 to 632 (ENLV…VHSL), 633 to 656 (AGLR…SMAT), 658 to 679 (LETL…IQYL), 680 to 704 (NKLN…NLKS), 766 to 790 (SPTL…IQNL), 791 to 813 (YQLE…GINL), 814 to 834 (DSLI…PDIS), and 835 to 857 (TNIS…IEKL).

As to quaternary structure, interacts with EDS1. In terms of tissue distribution, ubiquitous.

The catalysed reaction is NAD(+) + H2O = ADP-D-ribose + nicotinamide + H(+). In terms of biological role, disease resistance (R) protein that specifically recognizes the hopA1 type III effector avirulence protein from Pseudomonas syringae. Resistance proteins guard the plant against pathogens that contain an appropriate avirulence protein via an indirect interaction with this avirulence protein. That triggers a defense system including the hypersensitive response, which restricts the pathogen growth. The polypeptide is Disease resistance protein RPS6 (Arabidopsis thaliana (Mouse-ear cress)).